The primary structure comprises 521 residues: Bacillolysin (521 aa).

An N-terminal signal peptide occupies residues Met-1–Ala-27. Positions Ala-28–His-221 are cleaved as a propeptide — activation peptide. A Ca(2+)-binding site is contributed by Asp-360. His-364 lines the Zn(2+) pocket. Glu-365 is a catalytic residue. 2 residues coordinate Zn(2+): His-368 and Glu-388. Ca(2+)-binding residues include Asp-399, Asp-402, Asp-404, and Glu-407. His-449 (proton donor) is an active-site residue.

It belongs to the peptidase M4 family. Requires Ca(2+) as cofactor. The cofactor is Zn(2+).

The protein localises to the secreted. The enzyme catalyses Similar, but not identical, to that of thermolysin.. Functionally, extracellular zinc metalloprotease. The sequence is that of Bacillolysin (nprE) from Bacillus subtilis subsp. amylosacchariticus.